The following is a 375-amino-acid chain: Sulfite efflux pump SSU1 (375 aa).

Over M1–A25 the chain is Cytoplasmic. The chain crosses the membrane as a helical span at residues I26–L46. Over L47–Y59 the chain is Extracellular. Residues I60 to I80 form a helical membrane-spanning segment. Over T81 to M101 the chain is Cytoplasmic. The chain crosses the membrane as a helical span at residues L102–V122. Residues P123–G135 lie on the Extracellular side of the membrane. Residues L136–M156 form a helical membrane-spanning segment. Over T157–T167 the chain is Cytoplasmic. Residues A168 to A188 form a helical membrane-spanning segment. The Extracellular segment spans residues D189 to T200. An N-linked (GlcNAc...) asparagine glycan is attached at N193. A helical membrane pass occupies residues I201–I221. At Y222–R234 the chain is on the cytoplasmic side. The chain crosses the membrane as a helical span at residues A235 to M255. Topologically, residues Q256–E277 are extracellular. A helical membrane pass occupies residues I278 to L298. Over W299–K309 the chain is Cytoplasmic. Residues F310–T330 form a helical membrane-spanning segment. The Extracellular portion of the chain corresponds to T331–D343. A helical transmembrane segment spans residues V344–T364. Residues V365–K375 are Cytoplasmic-facing.

Belongs to the tellurite-resistance/dicarboxylate transporter (TDT) family.

It is found in the cell membrane. Sulphite efflux pump required for the secretion of sulphite as a reducing agent. In the presence of sulphite, cystine in keratin is directly cleaved to cysteine and S-sulphocysteine, and thereby, reduced proteins become accessible to hydrolysis by a variety of secreted endo- and exoproteases. Excretion of sulphite mediated by an efflux pump also represents a detoxification pathway for dermatophytes during infection of the epidermal stratum corneum, hair and nails, which are rich in cysteine. The sequence is that of Sulfite efflux pump SSU1 (SSU1) from Arthroderma otae (strain ATCC MYA-4605 / CBS 113480) (Microsporum canis).